The chain runs to 266 residues: Orotidine 5'-phosphate decarboxylase (266 aa).

Residues aspartate 37, 59–61 (KTH), 91–100 (DRKFADIGNT), tyrosine 217, and arginine 235 each bind substrate. The Proton donor role is filled by lysine 93.

It belongs to the OMP decarboxylase family.

It carries out the reaction orotidine 5'-phosphate + H(+) = UMP + CO2. It participates in pyrimidine metabolism; UMP biosynthesis via de novo pathway; UMP from orotate: step 2/2. In Cyberlindnera jadinii (Torula yeast), this protein is Orotidine 5'-phosphate decarboxylase (URA3).